We begin with the raw amino-acid sequence, 840 residues long: Leucine--tRNA ligase (840 aa).

The short motif at 44–55 is the 'HIGH' region element; sequence PYPSANGLHVGH. The 'KMSKS' region signature appears at 617–621; that stretch reads KMSKS. Lysine 620 is a binding site for ATP.

It belongs to the class-I aminoacyl-tRNA synthetase family.

It is found in the cytoplasm. It catalyses the reaction tRNA(Leu) + L-leucine + ATP = L-leucyl-tRNA(Leu) + AMP + diphosphate. This chain is Leucine--tRNA ligase, found in Borrelia garinii subsp. bavariensis (strain ATCC BAA-2496 / DSM 23469 / PBi) (Borreliella bavariensis).